A 130-amino-acid polypeptide reads, in one-letter code: Small ribosomal subunit protein uS9 (130 aa).

This sequence belongs to the universal ribosomal protein uS9 family.

The polypeptide is Small ribosomal subunit protein uS9 (Janthinobacterium sp. (strain Marseille) (Minibacterium massiliensis)).